The following is a 129-amino-acid chain: GM1b/asialo-GM1 oligosaccharide-binding R-type lectin (129 aa).

Residues 21 to 23 (FYN), 26 to 28 (RKD), phenylalanine 32, and 37 to 40 (YDDQ) contribute to the a carbohydrate site.

As to quaternary structure, homodimer. As to expression, highest expression in the outer part of the mantle rim. Highly expressed in gills, with a much lower expression in the digestive gland and posterior adductor muscle. Scarcely detectable in foot.

Its activity is regulated as follows. Hemagglutination activity requires divalent cations such as Ca(2+). Hemagglutination activity is weakly inhibited by monosaccharides such as D-Gal (25 mM), D-GalNAc (25 mM) and D-Fuc (25 mM) and by disaccharides such as melibiose (25 mM) and lactose (25 mM). Hemagglutination activity is inhibited by bovine submaxillary mucin, but not by porcine stomach mucin or fetuin. Its function is as follows. Galbeta1-3GalNAcbeta1-4Galbeta1-4Glc oligosaccharide-binding lectin. Binds strongly to the oligosaccharides of ganglioside GM1b and to a lesser extent its precursor asialo-GM1. Binds weakly to asialo-GM2 oligosaccharide and to the glycan moiety of globo-series stage-specific embryonal antigen 4 (SSEA-4) hexaose. Binds galactose, N-acetylgalactose and lactose. Does not bind GM1. Does not bind to Gal-beta1,3-GalNAc (Thomsen-Friedenreich antigen), the oligosaccharide of GM1a ganglioside or SSEA-4 tetraose. Does not bind to N-glycans, O-glycans or glycosaminoglycans of glycoproteins. Does not bind Lewis glycans, derivatives of lactose or N-acetyllactosamine or blood group (ABH-type) oligosaccharides. Does not bind glucose. Has hemagglutination activity towards rabbit erythrocytes. Displays cytotoxic effects against various cultured cell lines including human breast (MCF-7), cervical (HeLa) and colon cancer (Caco2) cell lines, as well as dog kidney (MDCK) cell line that express asialo-GM1 oligosaccharide at their cell surface. Shows dose- and time-dependent activation of MKK3/6, ERK1/2 and p38 MAPK, as well as caspase-3/9 in HeLa cervical cancer cells. No cytotoxic effect on BT474 human breast cancer cell line. May be involved in recognition of glycans found on parasitic or symbiotic microorganisms. This Mytilisepta virgata (Purplish bifurcate mussel) protein is GM1b/asialo-GM1 oligosaccharide-binding R-type lectin.